The sequence spans 407 residues: uncharacterized protein (407 aa).

The EAL domain occupies 1–250; the sequence is MLDPLDILTN…LERDVLKQRL (250 aa).

This is an uncharacterized protein from Bacillus subtilis (strain 168).